A 42-amino-acid polypeptide reads, in one-letter code: Aspartate-semialdehyde dehydrogenase leader peptide (42 aa).

This Streptococcus mutans serotype c (strain ATCC 700610 / UA159) protein is Aspartate-semialdehyde dehydrogenase leader peptide.